The sequence spans 699 residues: Elongation factor G (699 aa).

The 276-residue stretch at 8–283 (EHIRNIGICA…AVVDFLPSPI (276 aa)) folds into the tr-type G domain. GTP-binding positions include 17-24 (AHIDAGKT), 81-85 (DTPGH), and 135-138 (NKMD).

The protein belongs to the TRAFAC class translation factor GTPase superfamily. Classic translation factor GTPase family. EF-G/EF-2 subfamily.

The protein resides in the cytoplasm. In terms of biological role, catalyzes the GTP-dependent ribosomal translocation step during translation elongation. During this step, the ribosome changes from the pre-translocational (PRE) to the post-translocational (POST) state as the newly formed A-site-bound peptidyl-tRNA and P-site-bound deacylated tRNA move to the P and E sites, respectively. Catalyzes the coordinated movement of the two tRNA molecules, the mRNA and conformational changes in the ribosome. The sequence is that of Elongation factor G from Rickettsia peacockii (strain Rustic).